Here is a 165-residue protein sequence, read N- to C-terminus: Chorismate pyruvate-lyase (165 aa).

Substrate contacts are provided by methionine 35, arginine 77, leucine 115, and glutamate 156.

Belongs to the UbiC family. In terms of assembly, monomer.

It localises to the cytoplasm. It catalyses the reaction chorismate = 4-hydroxybenzoate + pyruvate. Its pathway is cofactor biosynthesis; ubiquinone biosynthesis. In terms of biological role, removes the pyruvyl group from chorismate, with concomitant aromatization of the ring, to provide 4-hydroxybenzoate (4HB) for the ubiquinone pathway. This Escherichia coli O17:K52:H18 (strain UMN026 / ExPEC) protein is Chorismate pyruvate-lyase.